Here is a 352-residue protein sequence, read N- to C-terminus: Photosystem II D2 protein (352 aa).

Thr2 bears the N-acetylthreonine mark. The residue at position 2 (Thr2) is a Phosphothreonine. The chain crosses the membrane as a helical span at residues Cys40–Thr60. His117 provides a ligand contact to chlorophyll a. A helical membrane pass occupies residues Gly124–Pro140. 2 residues coordinate pheophytin a: Gln129 and Asn142. Residues Val152 to Ala165 traverse the membrane as a helical segment. Position 197 (His197) interacts with chlorophyll a. Residues Ala207 to Asp227 form a helical membrane-spanning segment. Residues His214 and Phe261 each coordinate a plastoquinone. Residue His214 participates in Fe cation binding. His268 lines the Fe cation pocket. Residues Gly278–Arg294 form a helical membrane-spanning segment.

This sequence belongs to the reaction center PufL/M/PsbA/D family. PSII is composed of 1 copy each of membrane proteins PsbA, PsbB, PsbC, PsbD, PsbE, PsbF, PsbH, PsbI, PsbJ, PsbK, PsbL, PsbM, PsbT, PsbX, PsbY, PsbZ, Psb30/Ycf12, at least 3 peripheral proteins of the oxygen-evolving complex and a large number of cofactors. It forms dimeric complexes. The D1/D2 heterodimer binds P680, chlorophylls that are the primary electron donor of PSII, and subsequent electron acceptors. It shares a non-heme iron and each subunit binds pheophytin, quinone, additional chlorophylls, carotenoids and lipids. There is also a Cl(-1) ion associated with D1 and D2, which is required for oxygen evolution. The PSII complex binds additional chlorophylls, carotenoids and specific lipids. is required as a cofactor.

The protein localises to the plastid. Its subcellular location is the chloroplast thylakoid membrane. It catalyses the reaction 2 a plastoquinone + 4 hnu + 2 H2O = 2 a plastoquinol + O2. Its function is as follows. Photosystem II (PSII) is a light-driven water:plastoquinone oxidoreductase that uses light energy to abstract electrons from H(2)O, generating O(2) and a proton gradient subsequently used for ATP formation. It consists of a core antenna complex that captures photons, and an electron transfer chain that converts photonic excitation into a charge separation. The D1/D2 (PsbA/PsbD) reaction center heterodimer binds P680, the primary electron donor of PSII as well as several subsequent electron acceptors. D2 is needed for assembly of a stable PSII complex. This Tupiella akineta (Green alga) protein is Photosystem II D2 protein.